The sequence spans 861 residues: Semaphorin-4D (861 aa).

Residues 1–23 form the signal peptide; the sequence is MRMCAPVRGLFLALVVVLRTAVA. The region spanning 24-500 is the Sema domain; that stretch reads FAPVPRLTWE…SNSGVVQAPL (477 aa). The Extracellular portion of the chain corresponds to 24 to 733; it reads FAPVPRLTWE…TVYLKSSDNR (710 aa). 2 N-linked (GlcNAc...) asparagine glycosylation sites follow: asparagine 49 and asparagine 77. 2 disulfides stabilise this stretch: cysteine 97–cysteine 108 and cysteine 126–cysteine 135. 2 N-linked (GlcNAc...) asparagine glycosylation sites follow: asparagine 139 and asparagine 191. 2 disulfide bridges follow: cysteine 257/cysteine 370 and cysteine 281/cysteine 326. Asparagine 379 and asparagine 419 each carry an N-linked (GlcNAc...) asparagine glycan. The region spanning 502-551 is the PSI domain; that stretch reads FCEKHGSCEDCVLARDPYCAWSPAIKACVTLHQEEASSRGWIQDMSGDTS. Disulfide bonds link cysteine 503-cysteine 520, cysteine 509-cysteine 553, cysteine 512-cysteine 529, and cysteine 576-cysteine 624. The Ig-like C2-type domain maps to 555–636; sequence DKSKESFNQH…EERVRNKTVS (82 aa). N-linked (GlcNAc...) asparagine glycosylation is found at asparagine 613 and asparagine 632. The tract at residues 649–709 is disordered; it reads VPRTPPSPTS…KSSSGTSCEP (61 aa). A compositionally biased stretch (polar residues) spans 657–681; that stretch reads TSEDAQTEGSKITSKMPVASTQGSS. Residues 734–754 traverse the membrane as a helical segment; that stretch reads LLMSLLLFIFVLFLCLFSYNC. Residues 755–861 lie on the Cytoplasmic side of the membrane; the sequence is YKGYLPGQCL…KFADSDADGD (107 aa). A phosphoserine mark is found at serine 782 and serine 832. The segment at 793–839 is disordered; the sequence is VEPGSFSQQNGDHPKPALDTGYETEQDTITSKVPTDREDSQRIDELS. The segment covering 826–839 has biased composition (basic and acidic residues); the sequence is PTDREDSQRIDELS.

The protein belongs to the semaphorin family. As to quaternary structure, homodimer. Interacts with PLXNB1. Interacts with PLXNB2. In terms of tissue distribution, strongly expressed in lymphoid tissues, especially in the thymus, as well as in the nervous tissues. Expressed in neurons and glia in the developing hippocampus.

It is found in the cell membrane. Cell surface receptor for PLXNB1 and PLXNB2 that plays an important role in cell-cell signaling. Regulates GABAergic synapse development. Promotes the development of inhibitory synapses in a PLXNB1-dependent manner. Modulates the complexity and arborization of developing neurites in hippocampal neurons by activating PLXNB1 and interaction with PLXNB1 mediates activation of RHOA. Promotes the migration of cerebellar granule cells. Plays a role in the immune system; induces B-cells to aggregate and improves their viability (in vitro). Induces endothelial cell migration through the activation of PTK2B/PYK2, SRC, and the phosphatidylinositol 3-kinase-AKT pathway. The protein is Semaphorin-4D (Sema4d) of Mus musculus (Mouse).